A 316-amino-acid polypeptide reads, in one-letter code: MTVIDNHEALAEDGEMSEASARDYFELLKPRVMSLVVFTAFAGLVLAPGHINPVLGLIAILCIAVGAGASGALNMWYDADIDAIMSRTAKRPIPAGRIAPSEALAFGLVLSGFSVVILGLAVNWLSAAILAFTIFFYAVIYTMWLKRSTPQNIVIGGAAGAFPPMIGWACVTNSVTIESTVLFLIIFLWTPAHFWALALFKMRDYEAVGVPMLPNVSGERVTKHQIVAYAVLTAICAVLPSFLGFASFGYGLVAAALGAIFVYCSIAVWRMPDGDLKMIPAKKLFAFSIFYLFAVFSALMIDRLAAILVSQAGGSF.

Transmembrane regions (helical) follow at residues 32-52 (VMSLVVFTAFAGLVLAPGHIN), 53-73 (PVLGLIAILCIAVGAGASGAL), 93-113 (IPAGRIAPSEALAFGLVLSGF), 116-136 (VILGLAVNWLSAAILAFTIFF), 152-172 (NIVIGGAAGAFPPMIGWACVT), 180-200 (TVLFLIIFLWTPAHFWALALF), 221-241 (VTKHQIVAYAVLTAICAVLPS), 252-271 (LVAAALGAIFVYCSIAVWRM), and 289-309 (IFYLFAVFSALMIDRLAAILV).

The protein belongs to the UbiA prenyltransferase family. Protoheme IX farnesyltransferase subfamily.

The protein resides in the cell inner membrane. The enzyme catalyses heme b + (2E,6E)-farnesyl diphosphate + H2O = Fe(II)-heme o + diphosphate. The protein operates within porphyrin-containing compound metabolism; heme O biosynthesis; heme O from protoheme: step 1/1. In terms of biological role, converts heme B (protoheme IX) to heme O by substitution of the vinyl group on carbon 2 of heme B porphyrin ring with a hydroxyethyl farnesyl side group. This chain is Protoheme IX farnesyltransferase, found in Rhizobium etli (strain ATCC 51251 / DSM 11541 / JCM 21823 / NBRC 15573 / CFN 42).